We begin with the raw amino-acid sequence, 331 residues long: Pectinesterase (331 aa).

A signal peptide spans 1–17 (MVKSVLASALFAVSALA). Q139 serves as a coordination point for substrate. D162 (proton donor) is an active-site residue. The active-site Nucleophile is D183. 2 residues coordinate substrate: R248 and W250.

It belongs to the pectinesterase family.

It is found in the secreted. It catalyses the reaction [(1-&gt;4)-alpha-D-galacturonosyl methyl ester](n) + n H2O = [(1-&gt;4)-alpha-D-galacturonosyl](n) + n methanol + n H(+). It functions in the pathway glycan metabolism; pectin degradation; 2-dehydro-3-deoxy-D-gluconate from pectin: step 1/5. In terms of biological role, involved in maceration and soft-rotting of plant tissue. In Aspergillus aculeatus, this protein is Pectinesterase (pme1).